The following is a 666-amino-acid chain: Probable potassium transport system protein Kup (666 aa).

The next 12 membrane-spanning stretches (helical) occupy residues 16 to 36 (GFII…LYTM), 58 to 78 (ISLI…LIAL), 100 to 120 (PWLI…GALT), 149 to 169 (IITT…GTGF), 173 to 193 (IFGP…FFNM), 221 to 241 (IFIL…YSDL), 253 to 273 (WPFV…WILA), 294 to 314 (VYLV…LISG), 343 to 363 (LYIP…VLAF), 373 to 393 (YGLA…YYLI), 399 to 419 (PILA…FFLA), and 424 to 444 (FMHG…VMFI).

Belongs to the HAK/KUP transporter (TC 2.A.72) family.

Its subcellular location is the cell membrane. It carries out the reaction K(+)(in) + H(+)(in) = K(+)(out) + H(+)(out). Its function is as follows. Transport of potassium into the cell. Likely operates as a K(+):H(+) symporter. The sequence is that of Probable potassium transport system protein Kup from Streptococcus pyogenes serotype M3 (strain ATCC BAA-595 / MGAS315).